Consider the following 238-residue polypeptide: Sugar fermentation stimulation protein homolog (238 aa).

This sequence belongs to the SfsA family.

In Alteromonas mediterranea (strain DSM 17117 / CIP 110805 / LMG 28347 / Deep ecotype), this protein is Sugar fermentation stimulation protein homolog.